A 76-amino-acid chain; its full sequence is U1-cyrtautoxin-As1d (76 aa).

4 disulfides stabilise this stretch: Cys-23-Cys-37, Cys-30-Cys-51, Cys-36-Cys-66, and Cys-69-Cys-76.

The protein belongs to the neurotoxin 21 family. As to expression, expressed by the venom gland.

Its subcellular location is the secreted. In terms of biological role, neurotoxin with probable ion channel impairing activity. In vivo, is both paralytic and lethal, when injected into lepidopteran larvae. This Apomastus schlingeri (Trap-door spider) protein is U1-cyrtautoxin-As1d.